The sequence spans 550 residues: CTP synthase (550 aa).

The interval 1–267 (MKTKFIFITG…DQKIAIMLRL (267 aa)) is amidoligase domain. Serine 14 is a binding site for CTP. Position 14 (serine 14) interacts with UTP. Residues 15–20 (SLGKGL) and aspartate 72 each bind ATP. Mg(2+) is bound by residues aspartate 72 and glutamate 141. CTP contacts are provided by residues 148–150 (DIE), 188–193 (KTKPTQ), and lysine 224. UTP contacts are provided by residues 188 to 193 (KTKPTQ) and lysine 224. Residues 292–545 (TIGIVGKYVD…IKAAKKEAMG (254 aa)) enclose the Glutamine amidotransferase type-1 domain. Residue glycine 354 coordinates L-glutamine. Cysteine 381 serves as the catalytic Nucleophile; for glutamine hydrolysis. Residues 382–385 (LGMQ), glutamate 405, and arginine 473 contribute to the L-glutamine site. Active-site residues include histidine 518 and glutamate 520.

It belongs to the CTP synthase family. As to quaternary structure, homotetramer.

It catalyses the reaction UTP + L-glutamine + ATP + H2O = CTP + L-glutamate + ADP + phosphate + 2 H(+). It carries out the reaction L-glutamine + H2O = L-glutamate + NH4(+). The catalysed reaction is UTP + NH4(+) + ATP = CTP + ADP + phosphate + 2 H(+). Its pathway is pyrimidine metabolism; CTP biosynthesis via de novo pathway; CTP from UDP: step 2/2. Allosterically activated by GTP, when glutamine is the substrate; GTP has no effect on the reaction when ammonia is the substrate. The allosteric effector GTP functions by stabilizing the protein conformation that binds the tetrahedral intermediate(s) formed during glutamine hydrolysis. Inhibited by the product CTP, via allosteric rather than competitive inhibition. Catalyzes the ATP-dependent amination of UTP to CTP with either L-glutamine or ammonia as the source of nitrogen. Regulates intracellular CTP levels through interactions with the four ribonucleotide triphosphates. This chain is CTP synthase, found in Nitratidesulfovibrio vulgaris (strain DSM 19637 / Miyazaki F) (Desulfovibrio vulgaris).